Here is a 215-residue protein sequence, read N- to C-terminus: BAG family molecular chaperone regulator 5, mitochondrial (215 aa).

Residues 1–14 constitute a mitochondrion transit peptide; the sequence is MKRSRKFSSSTTTT. Residues 50–79 form the IQ domain; it reads ATAAAARIQSGYRSYRIRNLYKKISSINRE. One can recognise a BAG domain in the interval 72–149; it reads KISSINREAN…GMQEILDSIS (78 aa).

As to quaternary structure, binds to the ATPase domain of HSP70/HSC70 chaperones. Interacts with HSP70-1.

The protein localises to the mitochondrion. Functionally, co-chaperone that regulates diverse cellular pathways, such as programmed cell death and stress responses. This Arabidopsis thaliana (Mouse-ear cress) protein is BAG family molecular chaperone regulator 5, mitochondrial (BAG5).